The primary structure comprises 415 residues: Imidazolonepropionase (415 aa).

Residues His80 and His82 each contribute to the Fe(3+) site. Zn(2+) contacts are provided by His80 and His82. 3 residues coordinate 4-imidazolone-5-propanoate: Arg89, Tyr152, and His185. Tyr152 contacts N-formimidoyl-L-glutamate. Position 250 (His250) interacts with Fe(3+). His250 provides a ligand contact to Zn(2+). Gln253 serves as a coordination point for 4-imidazolone-5-propanoate. Asp325 serves as a coordination point for Fe(3+). Asp325 contributes to the Zn(2+) binding site. N-formimidoyl-L-glutamate is bound by residues Asn327 and Gly329. 4-imidazolone-5-propanoate is bound at residue Thr330.

The protein belongs to the metallo-dependent hydrolases superfamily. HutI family. It depends on Zn(2+) as a cofactor. The cofactor is Fe(3+).

It localises to the cytoplasm. It carries out the reaction 4-imidazolone-5-propanoate + H2O = N-formimidoyl-L-glutamate. Its pathway is amino-acid degradation; L-histidine degradation into L-glutamate; N-formimidoyl-L-glutamate from L-histidine: step 3/3. Functionally, catalyzes the hydrolytic cleavage of the carbon-nitrogen bond in imidazolone-5-propanoate to yield N-formimidoyl-L-glutamate. It is the third step in the universal histidine degradation pathway. This is Imidazolonepropionase from Rhizobium meliloti (strain 1021) (Ensifer meliloti).